A 209-amino-acid chain; its full sequence is Protease (209 aa).

Residues H60, D77, and C127 contribute to the active site.

Belongs to the peptidase C5 family. As to quaternary structure, interacts with protease cofactor pVI-C; this interaction is necessary for protease activation.

Its subcellular location is the virion. The protein localises to the host nucleus. It catalyses the reaction Cleaves proteins of the adenovirus and its host cell at two consensus sites: -Yaa-Xaa-Gly-Gly-|-Xaa- and -Yaa-Xaa-Gly-Xaa-|-Gly- (in which Yaa is Met, Ile or Leu, and Xaa is any amino acid).. With respect to regulation, requires DNA and protease cofactor for maximal activation. Inside nascent virions, becomes partially activated by binding to the viral DNA, allowing it to cleave the cofactor that binds to the protease and fully activates it. Actin, like the viral protease cofactor, seems to act as a cofactor in the cleavage of cytokeratin 18 and of actin itself. Cleaves viral precursor proteins (pTP, pIIIa, pVI, pVII, pVIII, and pX) inside newly assembled particles giving rise to mature virions. Protease complexed to its cofactor slides along the viral DNA to specifically locate and cleave the viral precursors. Mature virions have a weakened organization compared to the unmature virions, thereby facilitating subsequent uncoating. Without maturation, the particle lacks infectivity and is unable to uncoat. Late in adenovirus infection, in the cytoplasm, may participate in the cytoskeleton destruction. Cleaves host cell cytoskeletal keratins K7 and K18. The sequence is that of Protease from Homo sapiens (Human).